We begin with the raw amino-acid sequence, 554 residues long: Intraflagellar transport protein 56 (554 aa).

The segment at 1 to 24 (MMLSRAKPAVGRGVQHTDKRKKKG) is disordered. TPR repeat units lie at residues 57-90 (EDTN…ENCN), 92-125 (EVWV…LQNR), 151-184 (TEDQ…NREY), and 468-501 (ANDC…EGKR).

This sequence belongs to the IFT56 family. In terms of assembly, component of the IFT complex B. Interacts with IFT46; the interaction is direct.

It localises to the cell projection. Its subcellular location is the cilium. Its function is as follows. Component of the intraflagellar transport (IFT) complex B required for transport of proteins in the motile cilium. Required for transport of specific ciliary cargo proteins related to motility, while it is neither required for IFT complex B assembly or motion nor for cilium assembly. Required for efficient coupling between the accumulation of GLI2 and GLI3 at the ciliary tips and their dissociation from the negative regulator SUFU. Plays a key role in maintaining the integrity of the IFT complex B and the proper ciliary localization of the IFT complex B components. Not required for IFT complex A ciliary localization or function. Essential for maintaining proper microtubule organization within the ciliary axoneme. This Homo sapiens (Human) protein is Intraflagellar transport protein 56.